The following is a 364-amino-acid chain: Putative apoptosis inhibitor ORF42 (364 aa).

One copy of the BIR 1 repeat lies at 24–89; the sequence is RLATFRGYEY…CREGVVSAPQ (66 aa). The tract at residues 83–126 is disordered; it reads GVVSAPQQQPPPPPSTSIGAVGGDPRPEDMNVPERGWDPPMSKD. A compositionally biased stretch (basic and acidic residues) spans 117 to 126; sequence RGWDPPMSKD. 2 BIR repeats span residues 127-193 and 236-300; these read PKST…PLVV and RIAS…ANMA. The RING-type zinc-finger motif lies at 315-350; the sequence is CVICLGAKADTILKPCLHYSLCYGCSTQVQKCPLCR.

Functionally, may act as an apoptosis inhibitor. The polypeptide is Putative apoptosis inhibitor ORF42 (Magallana gigas (Pacific oyster)).